We begin with the raw amino-acid sequence, 329 residues long: Mitochondrial substrate carrier family protein Q (329 aa).

Solcar repeat units follow at residues 18 to 115, 125 to 206, and 216 to 310; these read VEAL…LKSI, LGTI…LRAL, and LGGL…VVIH. The next 6 membrane-spanning stretches (helical) occupy residues 21-41, 95-115, 131-151, 175-195, 221-241, and 298-318; these read LGHAISGGVAGMAAIALTYPF, LIGIGASSFVYYYWYTLLKSI, LAIAALAGCANVLTTLPIWVV, GFGGLYKGLIPALILVSNPSV, VFILGAIAKLIAGIVTYPYLL, and AFMFLVKDKVVIHAVAILFYL.

This sequence belongs to the mitochondrial carrier (TC 2.A.29) family.

It is found in the peroxisome membrane. Its function is as follows. May have transport activity. The chain is Mitochondrial substrate carrier family protein Q (mcfQ) from Dictyostelium discoideum (Social amoeba).